The following is a 224-amino-acid chain: Thiamine-triphosphatase (224 aa).

Ala2 bears the N-acetylalanine mark. The region spanning 5-201 (LIEVERKFTP…AKLLVYLQRF (197 aa)) is the CYTH domain. Positions 7 and 9 each coordinate Mg(2+). Residues Lys11, Arg55, Arg57, Lys65, and Arg125 each coordinate substrate. Residues Asp145, Glu157, and Glu159 each contribute to the Mg(2+) site. Glu157 provides a ligand contact to substrate. Lys193 contributes to the substrate binding site.

It belongs to the ThTPase family. As to quaternary structure, monomer. It depends on Mg(2+) as a cofactor.

The protein localises to the cytoplasm. The catalysed reaction is thiamine triphosphate + H2O = thiamine diphosphate + phosphate + H(+). Hydrolase highly specific for thiamine triphosphate (ThTP). In Rattus norvegicus (Rat), this protein is Thiamine-triphosphatase (Thtpa).